The sequence spans 240 residues: Probable transcriptional regulatory protein HP_0162 (240 aa).

The protein belongs to the TACO1 family.

It is found in the cytoplasm. The protein is Probable transcriptional regulatory protein HP_0162 of Helicobacter pylori (strain ATCC 700392 / 26695) (Campylobacter pylori).